A 91-amino-acid polypeptide reads, in one-letter code: Small ribosomal subunit protein uS19 (91 aa).

Belongs to the universal ribosomal protein uS19 family.

Functionally, protein S19 forms a complex with S13 that binds strongly to the 16S ribosomal RNA. The protein is Small ribosomal subunit protein uS19 of Synechococcus sp. (strain CC9605).